The chain runs to 430 residues: Bystin (430 aa).

2 stretches are compositionally biased toward basic residues: residues 1–12 (MGKDKKDRKHKG) and 26–35 (PSKRVKHRRE). 2 disordered regions span residues 1–45 (MGKD…ESFV) and 65–113 (MEEY…SETY). Over residues 68 to 78 (YGFRKTGDRKT) the composition is skewed to basic and acidic residues. Acidic residues predominate over residues 93-104 (RIDDDDEDDSDD).

The protein belongs to the bystin family.

It localises to the nucleus. It is found in the nucleolus. Functionally, required for processing of 20S pre-rRNA precursor and biogenesis of 40S ribosomal subunits. In Nematostella vectensis (Starlet sea anemone), this protein is Bystin (bysl).